A 520-amino-acid polypeptide reads, in one-letter code: Glucose starvation modulator protein 1 (520 aa).

Residues 20–48 (CVFCHEKHLQCSNERPCKNCVKRGLAHEC) constitute a DNA-binding region (zn(2)-C6 fungal-type). Residues 376–445 (DYEKLSQLNS…FRLFKTVAVG (70 aa)) enclose the PAS domain.

It belongs to the ERT1/acuK family.

The protein localises to the nucleus. Transcription factor which regulates nonfermentable carbon utilization. The sequence is that of Glucose starvation modulator protein 1 (GSM1) from Scheffersomyces stipitis (strain ATCC 58785 / CBS 6054 / NBRC 10063 / NRRL Y-11545) (Yeast).